The chain runs to 369 residues: Glutamate 5-kinase (369 aa).

Lys9 contacts ATP. Substrate is bound by residues Ser49, Asp136, and Asn148. ATP-binding positions include Thr168–Asp169 and Thr210–Lys216. In terms of domain architecture, PUA spans Gln275–Trp355.

Belongs to the glutamate 5-kinase family.

Its subcellular location is the cytoplasm. The catalysed reaction is L-glutamate + ATP = L-glutamyl 5-phosphate + ADP. It participates in amino-acid biosynthesis; L-proline biosynthesis; L-glutamate 5-semialdehyde from L-glutamate: step 1/2. In terms of biological role, catalyzes the transfer of a phosphate group to glutamate to form L-glutamate 5-phosphate. The chain is Glutamate 5-kinase from Streptococcus pneumoniae serotype 2 (strain D39 / NCTC 7466).